We begin with the raw amino-acid sequence, 575 residues long: Amino-acid acetyltransferase, mitochondrial (575 aa).

Residues Met-1–Ser-35 constitute a mitochondrion transit peptide. The region spanning Phe-398–His-557 is the N-acetyltransferase domain.

This sequence belongs to the acetyltransferase family.

It is found in the mitochondrion. It carries out the reaction L-glutamate + acetyl-CoA = N-acetyl-L-glutamate + CoA + H(+). Its pathway is amino-acid biosynthesis; L-arginine biosynthesis; N(2)-acetyl-L-ornithine from L-glutamate: step 1/4. In terms of biological role, N-acetylglutamate synthase involved in arginine biosynthesis. This chain is Amino-acid acetyltransferase, mitochondrial (ARG2), found in Debaryomyces hansenii (strain ATCC 36239 / CBS 767 / BCRC 21394 / JCM 1990 / NBRC 0083 / IGC 2968) (Yeast).